Consider the following 447-residue polypeptide: MTAHEVNFDGLVGLTHHYAGLSFGNEASTRHRFQVSNPRLAVKQGLLKMKALADAGFPQAVIPPHERPFIPALRQLGFTGSDEQILDKVARQAPRWLSSVSSASPMWVANAATVCPSADALDGKVHLTVANLNNKFHRALEAPVTEALLRAIFRDESQFSVHSALPQVALLGDEGAANHNRLGGEYGSAGVQLFVYGREEENEIRPARYPARQSREASEAVARLNQVNPQQVIFAQQNPEVIDQGVFHNDVIAVSNRQVLFCHEAAFARQKVLINQLRTRVDGFMAIEVPAGEVSVSDAVATYLFNSQLLSRNDGSMLLVLPRECQDHAGVWRYLNKLVAEDNPISAMQVFDLRESMANGGGPACLRLRVVLTEEERRAVNPAVMMNDALFTALNAWADRYYRDRLTAADLADPLLLREGREALDVLTRLLDLGSVYPFQQTGAADG.

Substrate-binding positions include 19–28 (AGLSFGNEAS), asparagine 110, and 137–138 (HR). Glutamate 174 is an active-site residue. Residue arginine 212 coordinates substrate. The active site involves histidine 248. Positions 250 and 359 each coordinate substrate. Cysteine 365 functions as the Nucleophile in the catalytic mechanism.

It belongs to the succinylarginine dihydrolase family. Homodimer.

It carries out the reaction N(2)-succinyl-L-arginine + 2 H2O + 2 H(+) = N(2)-succinyl-L-ornithine + 2 NH4(+) + CO2. The protein operates within amino-acid degradation; L-arginine degradation via AST pathway; L-glutamate and succinate from L-arginine: step 2/5. Functionally, catalyzes the hydrolysis of N(2)-succinylarginine into N(2)-succinylornithine, ammonia and CO(2). This is N-succinylarginine dihydrolase from Salmonella heidelberg (strain SL476).